The following is a 272-amino-acid chain: MCPATVLDSILKGVRADVAAREACISLSEIKAAAAAAPAPLDAMAALREPGIGVIAEVKRASPSVGSLATIADPAKLAQAYEDGGARIISVLTEERRFNGSLDDLDAVRAAVSVPVLRKDFVVQPYQIHEARAHGADMLLLIVAALDQSALMSMLDRTESLGMIALVEVRTEQEADRALKAGAKVIGVNARDLMTLEVDRDCFSRIAPGLPSNVIRIAESGVRGPADLLAYAGAGADAVLVGEGLVKSGDPRAAVADLVTAGTHPSCPKPAR.

This sequence belongs to the TrpC family.

It carries out the reaction 1-(2-carboxyphenylamino)-1-deoxy-D-ribulose 5-phosphate + H(+) = (1S,2R)-1-C-(indol-3-yl)glycerol 3-phosphate + CO2 + H2O. It participates in amino-acid biosynthesis; L-tryptophan biosynthesis; L-tryptophan from chorismate: step 4/5. This Mycobacterium leprae (strain Br4923) protein is Indole-3-glycerol phosphate synthase.